The following is a 317-amino-acid chain: Putative HTH-type transcriptional regulatory protein Mboo_0195 (317 aa).

Residues 132–185 form the HTH cro/C1-type domain; sequence LRELRERRSMSLGDLGQVLGVSRRTISKYESGMGTTLEVAIRIEEYFNTGVVES. Positions 143–162 form a DNA-binding region, H-T-H motif; that stretch reads LGDLGQVLGVSRRTISKYES.

The protein is Putative HTH-type transcriptional regulatory protein Mboo_0195 of Methanoregula boonei (strain DSM 21154 / JCM 14090 / 6A8).